Reading from the N-terminus, the 377-residue chain is MAKQDYYEILGVSKTAEEREIKKAYKRLAMKYHPDRNQGDKEAEAKFKEIKEAYEILTDAQKRAAYDQYGHAAFEQGGMGGGGGFGGGADFSDIFGDVFGDIFGGGRGRQRAARGADLRYNMELTLEEAVRGVTKEIRIPTLEECDVCHGSGAKAGSKPQTCPTCHGAGQVQMRQGFFAVQQTCPHCQGRGTLIKDPCNKCHGHGRVEKTKTLSVKIPAGVDTGDRIRLAGEGEAGEHGAPAGDLYVQVQVKQHAIFEREGNNLYCEVPINFTMAALGGEIEVPTLDGRVSLKVPGETQTGKLFRMRGKGVKSVRGGAQGDLLCRVVVETPVGLNEKQKQLLKELQESFGGPTGENNSPRSKSFFDGVKKFFDDLTR.

In terms of domain architecture, J spans 5–70; it reads DYYEILGVSK…QKRAAYDQYG (66 aa). The CR-type zinc-finger motif lies at 132 to 210; the sequence is GVTKEIRIPT…CHGHGRVEKT (79 aa). Cysteine 145, cysteine 148, cysteine 162, cysteine 165, cysteine 184, cysteine 187, cysteine 198, and cysteine 201 together coordinate Zn(2+). CXXCXGXG motif repeat units follow at residues 145 to 152, 162 to 169, 184 to 191, and 198 to 205; these read CDVCHGSG, CPTCHGAG, CPHCQGRG, and CNKCHGHG.

It belongs to the DnaJ family. As to quaternary structure, homodimer. It depends on Zn(2+) as a cofactor.

Its subcellular location is the cytoplasm. Its function is as follows. Participates actively in the response to hyperosmotic and heat shock by preventing the aggregation of stress-denatured proteins and by disaggregating proteins, also in an autonomous, DnaK-independent fashion. Unfolded proteins bind initially to DnaJ; upon interaction with the DnaJ-bound protein, DnaK hydrolyzes its bound ATP, resulting in the formation of a stable complex. GrpE releases ADP from DnaK; ATP binding to DnaK triggers the release of the substrate protein, thus completing the reaction cycle. Several rounds of ATP-dependent interactions between DnaJ, DnaK and GrpE are required for fully efficient folding. Also involved, together with DnaK and GrpE, in the DNA replication of plasmids through activation of initiation proteins. The chain is Chaperone protein DnaJ from Klebsiella pneumoniae (strain 342).